The sequence spans 104 residues: V-type ATP synthase subunit F (104 aa).

It belongs to the V-ATPase F subunit family.

Functionally, produces ATP from ADP in the presence of a proton gradient across the membrane. The protein is V-type ATP synthase subunit F of Thermus thermophilus (strain ATCC BAA-163 / DSM 7039 / HB27).